The sequence spans 224 residues: Urease accessory protein UreF (224 aa).

Belongs to the UreF family. As to quaternary structure, ureD, UreF and UreG form a complex that acts as a GTP-hydrolysis-dependent molecular chaperone, activating the urease apoprotein by helping to assemble the nickel containing metallocenter of UreC. The UreE protein probably delivers the nickel.

Its subcellular location is the cytoplasm. Functionally, required for maturation of urease via the functional incorporation of the urease nickel metallocenter. The polypeptide is Urease accessory protein UreF (Methylorubrum populi (strain ATCC BAA-705 / NCIMB 13946 / BJ001) (Methylobacterium populi)).